The chain runs to 361 residues: Molybdenum import ATP-binding protein ModC (361 aa).

The ABC transporter domain occupies 1-228; sequence MLTINIEKQL…EQMRPWVPLQ (228 aa). 31-38 serves as a coordination point for ATP; the sequence is GRSGAGKT. One can recognise a Mop domain in the interval 289 to 356; that stretch reads RSSIRNVLKG…IKGVTMTQMD (68 aa).

Belongs to the ABC transporter superfamily. Molybdate importer (TC 3.A.1.8) family. The complex is composed of two ATP-binding proteins (ModC), two transmembrane proteins (ModB) and a solute-binding protein (ModA).

The protein localises to the cell inner membrane. The catalysed reaction is molybdate(out) + ATP + H2O = molybdate(in) + ADP + phosphate + H(+). Part of the ABC transporter complex ModABC involved in molybdenum import. Responsible for energy coupling to the transport system. The protein is Molybdenum import ATP-binding protein ModC of Shewanella oneidensis (strain ATCC 700550 / JCM 31522 / CIP 106686 / LMG 19005 / NCIMB 14063 / MR-1).